The sequence spans 373 residues: P2Y purinoceptor 1 (373 aa).

Over 1–51 (MTEVLWPAVPNGTDTAFLADPGSPWGNSTVTSTAAVASPFKCALTKTGFQF) the chain is Extracellular. 2 N-linked (GlcNAc...) asparagine glycosylation sites follow: Asn11 and Asn27. Cystine bridges form between Cys42–Cys296 and Cys124–Cys202. Lys46 provides a ligand contact to ADP. The helical transmembrane segment at 52–74 (YYLPAVYILVFIIGFLGNSVAIW) threads the bilayer. Residues 75-87 (MFVFHMKPWSGIS) are Cytoplasmic-facing. Residues 88-109 (VYMFNLALADFLYVLTLPALIF) traverse the membrane as a helical segment. Over 110-125 (YYFNKTDWIFGDAMCK) the chain is Extracellular. Residue Asn113 is glycosylated (N-linked (GlcNAc...) asparagine). A helical membrane pass occupies residues 126-147 (LQRFIFHVNLYGSILFLTCISA). Residues 148 to 166 (HRYSGVVYPLKSLGRLKKK) lie on the Cytoplasmic side of the membrane. A helical membrane pass occupies residues 167 to 188 (NAVYISVLVWLIVVVGISPILF). Residues 189 to 214 (YSGTGIRKNKTITCYDTTSDEYLRSY) are Extracellular-facing. Asn197 is a glycosylation site (N-linked (GlcNAc...) asparagine). 203-205 (YDT) contributes to the ADP binding site. Residues 215–237 (FIYSMCTTVAMFCVPLVLILGCY) traverse the membrane as a helical segment. The Cytoplasmic portion of the chain corresponds to 238–260 (GLIVRALIYKDLDNSPLRRKSIY). A helical transmembrane segment spans residues 261–284 (LVIIVLTVFAVSYIPFHVMKTMNL). Residues 283–287 (NLRAR), 303–306 (YATY), and Arg310 contribute to the ADP site. Residues 285–303 (RARLDFQTPEMCAFNDRVY) lie on the Extracellular side of the membrane. Residues 304–325 (ATYQVTRGLASLNSCVDPILYF) form a helical membrane-spanning segment. Over 326–373 (LAGDTFRRRLSRATRKASRRSEANLQSKSEDMTLNILSEFKQNGDTSL) the chain is Cytoplasmic.

It belongs to the G-protein coupled receptor 1 family.

Its subcellular location is the cell membrane. Receptor for extracellular adenine nucleotides such as ADP. In platelets, binding to ADP leads to mobilization of intracellular calcium ions via activation of phospholipase C, a change in platelet shape, and ultimately platelet aggregation. The polypeptide is P2Y purinoceptor 1 (P2RY1) (Bos taurus (Bovine)).